Here is a 349-residue protein sequence, read N- to C-terminus: Cbb3-type cytochrome c oxidase subunit CcoP (349 aa).

Positions 1 to 67 (MADTDDEHAS…RVVRDRKGGR (67 aa)) are disordered. The Cytoplasmic portion of the chain corresponds to 1-96 (MADTDDEHAS…NPLPRWWLWT (96 aa)). The span at 16–30 (NRIELERQAADEAHK) shows a compositional bias: basic and acidic residues. Residues 97-117 (FYATIVWGVLYLIAYPAIPLV) traverse the membrane as a helical segment. Residues 118–349 (NGATQGLLGQ…AYVHSLGGGE (232 aa)) are Periplasmic-facing. 2 Cytochrome c domains span residues 168–258 (YTAN…LELG) and 265–346 (ALAA…HSLG). 8 residues coordinate heme c: Cys-181, Cys-184, His-185, Met-233, Cys-278, Cys-281, His-282, and Met-323.

The protein belongs to the CcoP / FixP family. In terms of assembly, component of the cbb3-type cytochrome c oxidase at least composed of CcoN, CcoO, CcoQ and CcoP. The cofactor is heme c.

The protein resides in the cell inner membrane. It functions in the pathway energy metabolism; oxidative phosphorylation. In terms of biological role, C-type cytochrome. Part of the cbb3-type cytochrome c oxidase complex. CcoP subunit is required for transferring electrons from donor cytochrome c via its heme groups to CcoO subunit. From there, electrons are shuttled to the catalytic binuclear center of CcoN subunit where oxygen reduction takes place. The complex also functions as a proton pump. This is Cbb3-type cytochrome c oxidase subunit CcoP from Paracoccus denitrificans (strain Pd 1222).